Reading from the N-terminus, the 655-residue chain is Acetyl-coenzyme A synthetase (655 aa).

CoA-binding positions include 193 to 196 (RGNK) and threonine 313. ATP contacts are provided by residues 389-391 (GEP), 413-418 (DTWWQT), aspartate 502, and arginine 517. CoA is bound at residue serine 525. Arginine 528 contacts ATP. The Mg(2+) site is built by valine 539 and histidine 541. Arginine 586 is a binding site for CoA. Residue lysine 611 is modified to N6-acetyllysine.

This sequence belongs to the ATP-dependent AMP-binding enzyme family. Mg(2+) is required as a cofactor. Acetylated. Deacetylation by the SIR2-homolog deacetylase activates the enzyme.

It carries out the reaction acetate + ATP + CoA = acetyl-CoA + AMP + diphosphate. Catalyzes the conversion of acetate into acetyl-CoA (AcCoA), an essential intermediate at the junction of anabolic and catabolic pathways. AcsA undergoes a two-step reaction. In the first half reaction, AcsA combines acetate with ATP to form acetyl-adenylate (AcAMP) intermediate. In the second half reaction, it can then transfer the acetyl group from AcAMP to the sulfhydryl group of CoA, forming the product AcCoA. This is Acetyl-coenzyme A synthetase from Psychrobacter cryohalolentis (strain ATCC BAA-1226 / DSM 17306 / VKM B-2378 / K5).